A 580-amino-acid chain; its full sequence is Mucolipin-1 (580 aa).

A disordered region spans residues 1-38; that stretch reads MTDPAGPRGSETERLLTPNPGYGTQVGPSPAPPTPPEE. Residues 1 to 65 are Cytoplasmic-facing; it reads MTDPAGPRGS…FRAKGRKPCK (65 aa). Serine 10 carries the post-translational modification Phosphoserine. The Dileucine motif; mediates targeting to lysosomes motif lies at 11-16; sequence ETERLL. An interaction with phosphoinositides region spans residues 42–62; sequence RRRLKYFFMSPCDKFRAKGRK. A helical transmembrane segment spans residues 66-86; sequence LMLQVVKILVVTVQLILFGLS. Over 87 to 298 the chain is Extracellular; the sequence is NQLAVTFREE…VFRHGDNSFR (212 aa). The interval 107–121 is extracellular/lumenal pore loop; that stretch reads LGYSDGADDTFAAYT. Cysteine 166 and cysteine 192 form a disulfide bridge. Residue asparagine 230 is glycosylated (N-linked (GlcNAc...) asparagine). The cysteines at positions 253 and 284 are disulfide-linked. Residues 299-321 form a helical membrane-spanning segment; sequence LLFDVVVILTCSLSFLLCARSLL. Topologically, residues 322 to 350 are cytoplasmic; the sequence is RGFLLQNEFVRFMWRQRRRVISLWERLEF. A helical membrane pass occupies residues 351-371; sequence VNGWYILLVTSDVLTISGTIM. The Extracellular portion of the chain corresponds to 372 to 382; the sequence is KIGIEAKNLAS. The chain crosses the membrane as a helical span at residues 383 to 405; that stretch reads YDVCSILLGTSTLLVWVGVIRYL. Residues 406–427 lie on the Cytoplasmic side of the membrane; the sequence is TFFHNYNILIATLRVALPSVMR. Residues 428-448 traverse the membrane as a helical segment; it reads FCCCVAVIYLGYCFCGWIVLG. Topologically, residues 449–456 are extracellular; the sequence is PYHVKFRS. Positions 457–477 form an intramembrane region, pore-forming; that stretch reads LSMVSECLFSLINGDDMFVTF. Residues 469–474 carry the Selectivity filter motif; the sequence is NGDDMF. At 478 to 491 the chain is on the extracellular side; sequence AAMQAQQGRSSLVW. Residues 492-513 traverse the membrane as a helical segment; the sequence is LFSQLYLYSFISLFIYMVLSLF. The Cytoplasmic portion of the chain corresponds to 514 to 580; that stretch reads IALITGAYDT…PSEEHSLLVN (67 aa). Phosphoserine; by PAK occurs at positions 557 and 559. Residues 565-567 form a required for palmitoylation and association with membranes region; sequence CCC. Positions 573–578 match the Dileucine internalization motif; mediates AP2 complex-dependent internalization motif; it reads EEHSLL.

Belongs to the transient receptor (TC 1.A.4) family. Polycystin subfamily. MCOLN1 sub-subfamily. As to quaternary structure, homotetramer. Homooligomer. Can heterooligomerize with MCOLN2 or MCOLN3; heteromeric assemblies have different channel properties as compared to the respective homooligomers and may be tissue-specific. Interacts with PDCD6. Interacts with TMEM163. Interacts with LAPTM4B. In terms of processing, palmitoylated; involved in association with membranes. Post-translationally, phosphorylation by PKA inhibits channel activity. Dephosphorylation increases activity. Proteolytically cleaved probably involving multiple lysosomal proteases including cathepsin B; inhibits lysosomal channel activity.

Its subcellular location is the late endosome membrane. It localises to the lysosome membrane. The protein resides in the cytoplasmic vesicle membrane. The protein localises to the cell projection. It is found in the phagocytic cup. Its subcellular location is the cytoplasmic vesicle. It localises to the phagosome membrane. The protein resides in the cell membrane. It catalyses the reaction Ca(2+)(in) = Ca(2+)(out). The enzyme catalyses Fe(2+)(in) = Fe(2+)(out). It carries out the reaction Mg(2+)(in) = Mg(2+)(out). The catalysed reaction is K(+)(in) = K(+)(out). It catalyses the reaction Na(+)(in) = Na(+)(out). Its activity is regulated as follows. Channel activity is controlled by multiple regulatory mechanisms in different subcellular compartments. Channel function is transiently modulated by changes in Ca(2+) in a pH-dependent manner; pH changes modify the aggregation state of unitary channels; a negative cooperativity between extracellular/lumenal Ca(2+) and H(+) is suggested. Regulated by phosphoinositides in a compartment-specific manner: in lysosomes activated by PtdIns(3,5)P2 (Phosphatidylinositol 3,5-bisphosphate) and at the plasma membrane inhibited by PtdIns(4,5)P2 (Phosphatidylinositol 4,5-bisphosphate). Its function is as follows. Nonselective cation channel probably playing a role in the regulation of membrane trafficking events and of metal homeostasis. Acts as a Ca(2+)-permeable cation channel with inwardly rectifying activity. Proposed to play a major role in Ca(2+) release from late endosome and lysosome vesicles to the cytoplasm, which is important for many lysosome-dependent cellular events, including the fusion and trafficking of these organelles, exocytosis and autophagy. Required for efficient uptake of large particles in macrophages in which Ca(2+) release from the lysosomes triggers lysosomal exocytosis. May also play a role in phagosome-lysosome fusion. Involved in lactosylceramide trafficking indicative for a role in the regulation of late endocytic membrane fusion/fission events. By mediating lysosomal Ca(2+) release is involved in regulation of mTORC1 signaling and in mTOR/TFEB-dependent lysosomal adaptation to environmental cues such as nutrient levels. Seems to act as lysosomal active oxygen species (ROS) sensor involved in ROS-induced TFEB activation and autophagy. Also functions as a Fe(2+) permeable channel in late endosomes and lysosomes. Also permeable to Mg(2+), Na(+). K(+) and Cs(+). Proposed to play a role in zinc homeostasis probably implicating its association with TMEM163. In adaptive immunity, TRPML2 and TRPML1 may play redundant roles in the function of the specialized lysosomes of B cells. In terms of biological role, may contribute to cellular lipase activity within the late endosomal pathway or at the cell surface which may be involved in processes of membrane reshaping and vesiculation, especially the growth of tubular structures. However, it is not known, whether it conveys the enzymatic activity directly, or merely facilitates the activity of an associated phospholipase. This chain is Mucolipin-1 (MCOLN1), found in Macaca fascicularis (Crab-eating macaque).